The sequence spans 379 residues: tRNA 2-selenouridine synthase (379 aa).

The 124-residue stretch at 15–138 (FQQNIPLMDV…ARNYLIKQIE (124 aa)) folds into the Rhodanese domain. C98 acts as the S-selanylcysteine intermediate in catalysis.

The protein belongs to the SelU family. Monomer.

The enzyme catalyses 5-methylaminomethyl-2-thiouridine(34) in tRNA + selenophosphate + (2E)-geranyl diphosphate + H2O + H(+) = 5-methylaminomethyl-2-selenouridine(34) in tRNA + (2E)-thiogeraniol + phosphate + diphosphate. It carries out the reaction 5-methylaminomethyl-2-thiouridine(34) in tRNA + (2E)-geranyl diphosphate = 5-methylaminomethyl-S-(2E)-geranyl-thiouridine(34) in tRNA + diphosphate. The catalysed reaction is 5-methylaminomethyl-S-(2E)-geranyl-thiouridine(34) in tRNA + selenophosphate + H(+) = 5-methylaminomethyl-2-(Se-phospho)selenouridine(34) in tRNA + (2E)-thiogeraniol. It catalyses the reaction 5-methylaminomethyl-2-(Se-phospho)selenouridine(34) in tRNA + H2O = 5-methylaminomethyl-2-selenouridine(34) in tRNA + phosphate. In terms of biological role, involved in the post-transcriptional modification of the uridine at the wobble position (U34) of tRNA(Lys), tRNA(Glu) and tRNA(Gln). Catalyzes the conversion of 2-thiouridine (S2U-RNA) to 2-selenouridine (Se2U-RNA). Acts in a two-step process involving geranylation of 2-thiouridine (S2U) to S-geranyl-2-thiouridine (geS2U) and subsequent selenation of the latter derivative to 2-selenouridine (Se2U) in the tRNA chain. In Bdellovibrio bacteriovorus (strain ATCC 15356 / DSM 50701 / NCIMB 9529 / HD100), this protein is tRNA 2-selenouridine synthase.